We begin with the raw amino-acid sequence, 215 residues long: Pyrrolidone-carboxylate peptidase (215 aa).

Residues glutamate 80, cysteine 143, and histidine 167 contribute to the active site.

Belongs to the peptidase C15 family. As to quaternary structure, homotetramer.

It is found in the cytoplasm. It carries out the reaction Release of an N-terminal pyroglutamyl group from a polypeptide, the second amino acid generally not being Pro.. Functionally, removes 5-oxoproline from various penultimate amino acid residues except L-proline. The chain is Pyrrolidone-carboxylate peptidase from Bacillus thuringiensis (strain Al Hakam).